The sequence spans 164 residues: SsrA-binding protein (164 aa).

Residues 141 to 164 (KLHDKRQDEKQKSIKREINSALKR) form a disordered region. A compositionally biased stretch (basic and acidic residues) spans 145–158 (KRQDEKQKSIKREI).

This sequence belongs to the SmpB family.

It localises to the cytoplasm. Its function is as follows. Required for rescue of stalled ribosomes mediated by trans-translation. Binds to transfer-messenger RNA (tmRNA), required for stable association of tmRNA with ribosomes. tmRNA and SmpB together mimic tRNA shape, replacing the anticodon stem-loop with SmpB. tmRNA is encoded by the ssrA gene; the 2 termini fold to resemble tRNA(Ala) and it encodes a 'tag peptide', a short internal open reading frame. During trans-translation Ala-aminoacylated tmRNA acts like a tRNA, entering the A-site of stalled ribosomes, displacing the stalled mRNA. The ribosome then switches to translate the ORF on the tmRNA; the nascent peptide is terminated with the 'tag peptide' encoded by the tmRNA and targeted for degradation. The ribosome is freed to recommence translation, which seems to be the essential function of trans-translation. The sequence is that of SsrA-binding protein from Prochlorococcus marinus (strain MIT 9215).